A 489-amino-acid chain; its full sequence is Inositol-pentakisphosphate 2-kinase (489 aa).

Positions 136 to 140 (EIKPK) match the EXKPK motif motif.

It belongs to the IPK1 type 2 family. In brain, it is expressed throughout the hippocampus (CA1, CA2, CA3 and dentate gyrus), inner layers of the cerebral cortex, and Purkinje cells of the cerebellum. In heart, it is expressed in cardiomyocytes but not in interstitial cells, blood vessels, or valves. Also expressed in testis.

The protein localises to the cytoplasm. The protein resides in the nucleus. The enzyme catalyses 1D-myo-inositol 1,3,4,5,6-pentakisphosphate + ATP = 1D-myo-inositol hexakisphosphate + ADP + H(+). Its function is as follows. Phosphorylates Ins(1,3,4,5,6)P5 at position 2 to form Ins(1,2,3,4,5,6)P6 (InsP6 or phytate). InsP6 is involved in many processes such as mRNA export, non-homologous end-joining, endocytosis, ion channel regulation. It also protects cells from TNF-alpha-induced apoptosis. The sequence is that of Inositol-pentakisphosphate 2-kinase (Ippk) from Mus musculus (Mouse).